The sequence spans 1488 residues: Neuropathy target esterase sws (1488 aa).

Residues 1 to 34 lie on the Lumenal side of the membrane; the sequence is MDVLELLRASVNGCYNTLFSDAWSQYVSKQIATT. The chain crosses the membrane as a helical span at residues 35-55; the sequence is TYWYGALLAIGALFIAWFLYF. At 56 to 1488 the chain is on the cytoplasmic side; the sequence is KRLASLRLRD…ENVTEADTKN (1433 aa). 175–302 serves as a coordination point for a nucleoside 3',5'-cyclic phosphate; it reads IFGHFEKPIF…IRVIQVIMIR (128 aa). 2 disordered regions span residues 339 to 379 and 402 to 440; these read PGPV…DPNP and QQQQSSGVSVGGTHRSSGACTPTGSGGESPDGTGNATIT. 2 stretches are compositionally biased toward low complexity: residues 344 to 356 and 402 to 413; these read SQASQASRAMASR and QQQQSSGVSVGG. Residues 415–424 are compositionally biased toward polar residues; sequence HRSSGACTPT. A nucleoside 3',5'-cyclic phosphate is bound by residues 458 to 587 and 576 to 703; these read ELGL…VVRR and IVLD…LSHR. A PNPLA domain is found at 929–1095; that stretch reads LVLGGGGARG…VNNLPGHLWR (167 aa). The GXGXXG signature appears at 933-938; it reads GGGARG. A GXSXG motif is present at residues 960–964; that stretch reads GVSIG. S962 serves as the catalytic Nucleophile. D1082 serves as the catalytic Proton acceptor. The DGA/G signature appears at 1082–1084; it reads DGG. S1176 is subject to Phosphoserine. 2 disordered regions span residues 1348-1376 and 1398-1488; these read RKVDKSTQSTPPTPNKKHPSTPTSSQGNL and EHKR…DTKN. The segment covering 1399 to 1410 has biased composition (basic residues); the sequence is HKRRQKSKHKRD. Positions 1440-1452 are enriched in basic and acidic residues; it reads IDAKLDQLRKLQQ. Residues 1456–1470 show a composition bias toward acidic residues; sequence QGNESEQEQEQEQEQ.

The protein belongs to the NTE family. As to quaternary structure, interacts with Pka-C3; interaction inhibits the catalytic function of Pka-C3 and the esterase activity of sws.

The protein localises to the endoplasmic reticulum membrane. It carries out the reaction a 1-acyl-sn-glycero-3-phosphocholine + H2O = sn-glycerol 3-phosphocholine + a fatty acid + H(+). In terms of biological role, phospholipase B that deacylates intracellular phosphatidylcholine (PtdCho), generating glycerophosphocholine (GroPtdCho). This deacylation occurs at both sn-2 and sn-1 positions of PtdCho. Its specific chemical modification by certain organophosphorus (OP) compounds leads to distal axonopathy. Plays a role in the signaling mechanism between neurons and glia that regulates glia wrapping during development of the adult brain. Essential for membrane lipid homeostasis and cell survival in both neurons and glia of the adult brain. The protein is Neuropathy target esterase sws of Drosophila mojavensis (Fruit fly).